The chain runs to 363 residues: Cobalt-precorrin-5B C(1)-methyltransferase (363 aa).

This sequence belongs to the CbiD family.

The enzyme catalyses Co-precorrin-5B + S-adenosyl-L-methionine = Co-precorrin-6A + S-adenosyl-L-homocysteine. It participates in cofactor biosynthesis; adenosylcobalamin biosynthesis; cob(II)yrinate a,c-diamide from sirohydrochlorin (anaerobic route): step 6/10. Catalyzes the methylation of C-1 in cobalt-precorrin-5B to form cobalt-precorrin-6A. This Treponema denticola (strain ATCC 35405 / DSM 14222 / CIP 103919 / JCM 8153 / KCTC 15104) protein is Cobalt-precorrin-5B C(1)-methyltransferase.